Here is a 948-residue protein sequence, read N- to C-terminus: Translation initiation factor IF-2 (948 aa).

3 disordered regions span residues 61–120 (IQAN…PALI), 162–243 (KSRE…TQSA), and 255–285 (QEKD…SHKI). The span at 68–78 (KNPEQDNKDDL) shows a compositional bias: basic and acidic residues. Residues 173 to 189 (SNTNNANSTNNANNVNN) show a composition bias toward low complexity. Residues 190–207 (AKKEISEVKKQEQEIKRH) are compositionally biased toward basic and acidic residues. Residues 208 to 219 (ENIKRRTGFRVI) show a composition bias toward basic residues. Residues 230–243 (ENSVAESKKPTQSA) are compositionally biased toward polar residues. The tr-type G domain maps to 447–616 (ERPPVVTIMG…LIQADIMELK (170 aa)). Positions 456 to 463 (GHVDHGKT) are G1. Position 456 to 463 (456 to 463 (GHVDHGKT)) interacts with GTP. Residues 481–485 (GITQH) are G2. A G3 region spans residues 502–505 (DTPG). Residues 502-506 (DTPGH) and 556-559 (NKMD) each bind GTP. The interval 556-559 (NKMD) is G4. A G5 region spans residues 592–594 (SAK).

It belongs to the TRAFAC class translation factor GTPase superfamily. Classic translation factor GTPase family. IF-2 subfamily.

The protein localises to the cytoplasm. In terms of biological role, one of the essential components for the initiation of protein synthesis. Protects formylmethionyl-tRNA from spontaneous hydrolysis and promotes its binding to the 30S ribosomal subunits. Also involved in the hydrolysis of GTP during the formation of the 70S ribosomal complex. This chain is Translation initiation factor IF-2, found in Helicobacter pylori (strain Shi470).